A 193-amino-acid polypeptide reads, in one-letter code: Hypoxanthine/guanine phosphoribosyltransferase (193 aa).

It belongs to the purine/pyrimidine phosphoribosyltransferase family. Archaeal HPRT subfamily. As to quaternary structure, homodimer.

The protein resides in the cytoplasm. The catalysed reaction is IMP + diphosphate = hypoxanthine + 5-phospho-alpha-D-ribose 1-diphosphate. It carries out the reaction GMP + diphosphate = guanine + 5-phospho-alpha-D-ribose 1-diphosphate. Its pathway is purine metabolism; IMP biosynthesis via salvage pathway; IMP from hypoxanthine: step 1/1. Its function is as follows. Catalyzes a salvage reaction resulting in the formation of IMP that is energically less costly than de novo synthesis. Prefers hypoxanthine, has 66% activity with guanine while activity with adenine, xanthine, uracil, orotate, or cytosine is negligible. The chain is Hypoxanthine/guanine phosphoribosyltransferase from Methanothermobacter marburgensis (strain ATCC BAA-927 / DSM 2133 / JCM 14651 / NBRC 100331 / OCM 82 / Marburg) (Methanobacterium thermoautotrophicum).